The chain runs to 247 residues: 5'-nucleotidase SurE (247 aa).

4 residues coordinate a divalent metal cation: Asp8, Asp9, Ser39, and Asn91.

The protein belongs to the SurE nucleotidase family. The cofactor is a divalent metal cation.

It is found in the cytoplasm. It carries out the reaction a ribonucleoside 5'-phosphate + H2O = a ribonucleoside + phosphate. Functionally, nucleotidase that shows phosphatase activity on nucleoside 5'-monophosphates. The sequence is that of 5'-nucleotidase SurE from Methylobacillus flagellatus (strain ATCC 51484 / DSM 6875 / VKM B-1610 / KT).